Reading from the N-terminus, the 205-residue chain is GTP cyclohydrolase-2 (205 aa).

49 to 53 is a binding site for GTP; it reads RIHSE. Zn(2+) contacts are provided by Cys-54, Cys-65, and Cys-67. Residues Gln-70, 92–94, and Thr-114 contribute to the GTP site; that span reads EGR. Asp-126 functions as the Proton acceptor in the catalytic mechanism. The active-site Nucleophile is Arg-128. Residues Thr-149 and Lys-154 each coordinate GTP.

It belongs to the GTP cyclohydrolase II family. Zn(2+) serves as cofactor.

It catalyses the reaction GTP + 4 H2O = 2,5-diamino-6-hydroxy-4-(5-phosphoribosylamino)-pyrimidine + formate + 2 phosphate + 3 H(+). It functions in the pathway cofactor biosynthesis; riboflavin biosynthesis; 5-amino-6-(D-ribitylamino)uracil from GTP: step 1/4. Catalyzes the conversion of GTP to 2,5-diamino-6-ribosylamino-4(3H)-pyrimidinone 5'-phosphate (DARP), formate and pyrophosphate. This Shewanella woodyi (strain ATCC 51908 / MS32) protein is GTP cyclohydrolase-2.